A 271-amino-acid polypeptide reads, in one-letter code: 2,3,4,5-tetrahydropyridine-2,6-dicarboxylate N-succinyltransferase (271 aa).

Arginine 102 and aspartate 139 together coordinate substrate.

This sequence belongs to the transferase hexapeptide repeat family. In terms of assembly, homotrimer.

Its subcellular location is the cytoplasm. It carries out the reaction (S)-2,3,4,5-tetrahydrodipicolinate + succinyl-CoA + H2O = (S)-2-succinylamino-6-oxoheptanedioate + CoA. Its pathway is amino-acid biosynthesis; L-lysine biosynthesis via DAP pathway; LL-2,6-diaminopimelate from (S)-tetrahydrodipicolinate (succinylase route): step 1/3. The sequence is that of 2,3,4,5-tetrahydropyridine-2,6-dicarboxylate N-succinyltransferase from Coxiella burnetii (strain Dugway 5J108-111).